A 437-amino-acid polypeptide reads, in one-letter code: MLMRLYTFFAAALLACCAAAGPLHPELPQLVGKSWIPDWWFPFPRPSTRAATTTTTPATSTTGLATTTTKPTTTSSKPVTPTPQPATSTAQPAISSTANATATATASSASTSTTSSSTSASTSTSAAAPSTPTTVVPFGQVIRSCTVKGTVAITFDDGPYDYTNKLLDIFDANGAKATLFVNAQNFGSITDYSSVMLRAFNTGHQIASHTYDHADLSTLNGAGIISEMTKLDDVLATITNGYRPTYMRVPYFAYSPLVLQTMADLKYHVIEADIDTKDYEHDTPDGVSVSVGFFRDGLNAGGSIALAHDVHQTTVDLLIQQLLDEVKRRGLKAVTVGECLGDPRANWYRTTPVQVPTGTSTTSPTATPTSPGTPPPAPTQPGVASNCQKWHTVVSGDTCYDIAAANGISLDNLYKWNPAVGTSCASLWLGYAVCVGV.

The N-terminal stretch at 1–20 (MLMRLYTFFAAALLACCAAA) is a signal peptide. Residues 47-132 (STRAATTTTT…STSAAAPSTP (86 aa)) are disordered. Asn99 carries an N-linked (GlcNAc...) asparagine glycan. One can recognise a NodB homology domain in the interval 149–334 (GTVAITFDDG…EVKRRGLKAV (186 aa)). Asp156 serves as the catalytic Proton acceptor. Residues Asp157, His209, and His213 each contribute to the Zn(2+) site. Tyr251 serves as a coordination point for substrate. His308 serves as the catalytic Proton donor. Low complexity predominate over residues 350–370 (TTPVQVPTGTSTTSPTATPTS). The interval 350-384 (TTPVQVPTGTSTTSPTATPTSPGTPPPAPTQPGVA) is disordered. Residues 389–435 (KWHTVVSGDTCYDIAAANGISLDNLYKWNPAVGTSCASLWLGYAVCV) form the LysM domain.

It depends on Zn(2+) as a cofactor. The cofactor is Co(2+).

Its subcellular location is the secreted. It carries out the reaction peptidoglycan-N-acetyl-D-glucosamine + H2O = peptidoglycan-D-glucosamine + acetate.. Functionally, catalyzes the deacetylation of N-acetylglucosamine (GlcNAc) residues in peptidoglycan. The chain is Probable peptidoglycan-N-acetylglucosamine deacetylase ARB_03699 from Arthroderma benhamiae (strain ATCC MYA-4681 / CBS 112371) (Trichophyton mentagrophytes).